The sequence spans 338 residues: Adenylosuccinate synthetase (338 aa).

Residues 12-18 and 42-44 each bind GTP; these read GDEGKGK and GHT. D13 serves as the catalytic Proton acceptor. Residues D13 and G42 each contribute to the Mg(2+) site. Residues 13–16, 40–43, T127, R141, Q179, T194, and R256 each bind IMP; these read DEGK and NAGH. H43 functions as the Proton donor in the catalytic mechanism. 252 to 258 provides a ligand contact to substrate; the sequence is TVTGRRR. GTP-binding positions include R258, 284–286, and 324–326; these read CLD and STG.

This sequence belongs to the adenylosuccinate synthetase family. Homodimer. The cofactor is Mg(2+).

The protein resides in the cytoplasm. It catalyses the reaction IMP + L-aspartate + GTP = N(6)-(1,2-dicarboxyethyl)-AMP + GDP + phosphate + 2 H(+). It participates in purine metabolism; AMP biosynthesis via de novo pathway; AMP from IMP: step 1/2. In terms of biological role, plays an important role in the de novo pathway of purine nucleotide biosynthesis. Catalyzes the first committed step in the biosynthesis of AMP from IMP. This chain is Adenylosuccinate synthetase, found in Methanococcus maripaludis (strain C7 / ATCC BAA-1331).